The following is a 76-amino-acid chain: Short coiled-coil protein B (76 aa).

Residues E6–L52 are a coiled coil.

The protein belongs to the SCOC family.

It localises to the golgi apparatus membrane. The protein localises to the golgi apparatus. Its subcellular location is the trans-Golgi network. The protein resides in the cytoplasm. It is found in the cytosol. Positive regulator of amino acid starvation-induced autophagy. The polypeptide is Short coiled-coil protein B (scocb) (Danio rerio (Zebrafish)).